Reading from the N-terminus, the 369-residue chain is Maltose/maltodextrin import ATP-binding protein MalK (369 aa).

An ABC transporter domain is found at 4–234 (VTLSSVYKAF…PANRFVAGFI (231 aa)). 36–43 (GPSGCGKS) provides a ligand contact to ATP.

It belongs to the ABC transporter superfamily. Maltooligosaccharide importer (TC 3.A.1.1.1) family. The complex is composed of two ATP-binding proteins (MalK), two transmembrane proteins (MalG and MalK) and a solute-binding protein (MalE).

The protein localises to the cell inner membrane. The catalysed reaction is D-maltose(out) + ATP + H2O = D-maltose(in) + ADP + phosphate + H(+). Its function is as follows. Part of the ABC transporter complex MalEFGK involved in maltose/maltodextrin import. Responsible for energy coupling to the transport system. The chain is Maltose/maltodextrin import ATP-binding protein MalK from Yersinia pestis bv. Antiqua (strain Antiqua).